The sequence spans 319 residues: Proline hydroxylase buaE (319 aa).

A Fe2OG dioxygenase domain is found at 168-280 (NSSELRLNHY…RYSIAYFGKP (113 aa)). 3 residues coordinate Fe cation: H195, D197, and H255. R271 contacts 2-oxoglutarate.

The protein belongs to the iron/ascorbate-dependent oxidoreductase family. The cofactor is Fe(2+).

It participates in mycotoxin biosynthesis. Functionally, proline hydroxylase; part of the gene cluster that mediates the biosynthesis of burnettramic acids, an unusual class of bolaamphiphilic pyrrolizidinediones that display potent antibacterial, antifungal, and cytotoxic activities. The first step of the biosynthesis of burnettramic acids is the hydroxylation of proline by the proline hydroxylase buaE to generate 4-hydroxyproline. The PKS-NRPS buaA and trans-enoyl reductase buaC construct the highly reduced polyketide chain, and the condensation (C) domain of buaA then catalyzes the amide bond formation with the activated 4-hydroxyproline. This is followed by the R domain releasing the nascent polyketide-peptide directly via a Dieckmann condensation to afford a tetramic acid fused to the hydroxyproline, generating the bicyclic pyrrolidinedione moiety. The cytochrome P450 monooxygenases buaD and buaG are likely responsible for the multiple hydroxylations on the polyketide chain and its terminus, although in the heterologous context, buaD does not appear to be required. Therefore, while buaG may be a multifunctional cytochrome P450 monooxygenase, it cannot be ruled out that the two secondary alcohols on the polyketide chain could have an acetate origin. Finally, the glycosyltransferase buaB transfers beta-D-mannose to the aglycone burnettramic acid A to form burnettramic acid A. Burnettramic acid B is a minor cis-pyrrolizidine epimer of burnettramic acid A and it is likely that small amounts of it form naturally in acidic environments. This Petromyces alliaceus (Aspergillus alliaceus) protein is Proline hydroxylase buaE.